The sequence spans 362 residues: Adenosine deaminase (362 aa).

The Zn(2+) site is built by H19 and H21. Residues H21, D23, and G181 each coordinate substrate. Zn(2+) is bound at residue H208. E211 acts as the Proton donor in catalysis. D300 serves as a coordination point for Zn(2+).

It belongs to the metallo-dependent hydrolases superfamily. Adenosine and AMP deaminases family. Adenosine deaminase subfamily. Requires Zn(2+) as cofactor.

The enzyme catalyses adenosine + H2O + H(+) = inosine + NH4(+). It carries out the reaction 2'-deoxyadenosine + H2O + H(+) = 2'-deoxyinosine + NH4(+). Functionally, catalyzes the hydrolytic deamination of adenosine and 2-deoxyadenosine. The protein is Adenosine deaminase of Mycobacterium ulcerans (strain Agy99).